The primary structure comprises 163 residues: Phosphopantetheine adenylyltransferase (163 aa).

Residue Ser9 coordinates substrate. ATP is bound by residues 9–10 (SF) and His17. Substrate-binding residues include Lys41, Thr73, and Arg87. ATP is bound by residues 88–90 (GLR), Glu98, and 123–129 (YSFISSG).

This sequence belongs to the bacterial CoaD family. As to quaternary structure, homohexamer. Mg(2+) is required as a cofactor.

It localises to the cytoplasm. It carries out the reaction (R)-4'-phosphopantetheine + ATP + H(+) = 3'-dephospho-CoA + diphosphate. Its pathway is cofactor biosynthesis; coenzyme A biosynthesis; CoA from (R)-pantothenate: step 4/5. Functionally, reversibly transfers an adenylyl group from ATP to 4'-phosphopantetheine, yielding dephospho-CoA (dPCoA) and pyrophosphate. The protein is Phosphopantetheine adenylyltransferase of Desulforudis audaxviator (strain MP104C).